Here is a 299-residue protein sequence, read N- to C-terminus: NAD(+) hydrolase PdTIR (299 aa).

The 134-residue stretch at 164–297 (PPHDIFISHA…EIVADLMAII (134 aa)) folds into the TIR domain. Residues 173–174 (AW) and Arg-203 each bind NAD(+). Glu-239 is an active-site residue.

As to quaternary structure, homodimer. Interacts with host MYD88.

The catalysed reaction is NAD(+) + H2O = ADP-D-ribose + nicotinamide + H(+). NAD(+) hydrolase (NADase) that catalyzes cleavage of NAD(+) into ADP-D-ribose (ADPR) and nicotinamide. The chain is NAD(+) hydrolase PdTIR from Paracoccus denitrificans (strain Pd 1222).